Here is a 251-residue protein sequence, read N- to C-terminus: UPF0246 protein TM1040_2658 (251 aa).

The protein belongs to the UPF0246 family.

This chain is UPF0246 protein TM1040_2658, found in Ruegeria sp. (strain TM1040) (Silicibacter sp.).